The chain runs to 81 residues: MRKGVHPKNNLVVFKDGSNGAMFLTRSTLNSKETIKYTDGKEYPLITVEITSRSHPFYTGQQKFVDAAGRIDKFNKRYKKS.

The protein belongs to the bacterial ribosomal protein bL31 family. Type B subfamily. As to quaternary structure, part of the 50S ribosomal subunit.

The protein is Large ribosomal subunit protein bL31B of Borrelia garinii subsp. bavariensis (strain ATCC BAA-2496 / DSM 23469 / PBi) (Borreliella bavariensis).